Reading from the N-terminus, the 179-residue chain is 3-hydroxyanthranilate 3,4-dioxygenase (179 aa).

Arginine 47 is a binding site for O2. The Fe cation site is built by histidine 51, glutamate 57, and histidine 96. Glutamate 57 provides a ligand contact to substrate. Arginine 100 and glutamate 110 together coordinate substrate. Fe cation contacts are provided by cysteine 125, cysteine 128, cysteine 162, and cysteine 165.

The protein belongs to the 3-HAO family. Requires Fe(2+) as cofactor.

The catalysed reaction is 3-hydroxyanthranilate + O2 = (2Z,4Z)-2-amino-3-carboxymuconate 6-semialdehyde. The protein operates within cofactor biosynthesis; NAD(+) biosynthesis; quinolinate from L-kynurenine: step 3/3. Functionally, catalyzes the oxidative ring opening of 3-hydroxyanthranilate to 2-amino-3-carboxymuconate semialdehyde, which spontaneously cyclizes to quinolinate. The protein is 3-hydroxyanthranilate 3,4-dioxygenase of Bacillus cereus (strain ATCC 10987 / NRS 248).